The chain runs to 162 residues: NADH-quinone oxidoreductase subunit I (162 aa).

4Fe-4S ferredoxin-type domains lie at 53–83 (LRRY…IEAE) and 93–122 (TRYD…ETRI). Residues Cys63, Cys66, Cys69, Cys73, Cys102, Cys105, Cys108, and Cys112 each coordinate [4Fe-4S] cluster.

The protein belongs to the complex I 23 kDa subunit family. In terms of assembly, NDH-1 is composed of 14 different subunits. Subunits NuoA, H, J, K, L, M, N constitute the membrane sector of the complex. [4Fe-4S] cluster serves as cofactor.

It is found in the cell inner membrane. The catalysed reaction is a quinone + NADH + 5 H(+)(in) = a quinol + NAD(+) + 4 H(+)(out). Functionally, NDH-1 shuttles electrons from NADH, via FMN and iron-sulfur (Fe-S) centers, to quinones in the respiratory chain. The immediate electron acceptor for the enzyme in this species is believed to be ubiquinone. Couples the redox reaction to proton translocation (for every two electrons transferred, four hydrogen ions are translocated across the cytoplasmic membrane), and thus conserves the redox energy in a proton gradient. The polypeptide is NADH-quinone oxidoreductase subunit I (Dechloromonas aromatica (strain RCB)).